A 1291-amino-acid polypeptide reads, in one-letter code: Period circadian protein homolog 1 (1291 aa).

Positions 1 to 134 (MSGPLEGADG…SSEQSARART (134 aa)) are disordered. Residues 1–151 (MSGPLEGADG…LRELKLRLPP (151 aa)) form an interaction with BTRC region. The segment covering 48–115 (NSNGSSGNES…AYSLLSASSE (68 aa)) has biased composition (low complexity). Polar residues predominate over residues 116-132 (QDNPSTSGCSSEQSARA). T121 carries the post-translational modification Phosphothreonine; by CSNK1E. Phosphoserine; by CSNK1E is present on residues S122 and S126. A Nuclear export signal 1 motif is present at residues 138–147 (LMTALRELKL). 2 consecutive PAS domains span residues 208-275 (ITSE…PSRL) and 348-414 (YEAP…KILQ). Positions 422–465 (HSPIRFCARNGEYVTMDTSWAGFVHPWSRKVAFVLGRHKVRTAP) constitute a PAC domain. The short motif at 489–498 (LSEQIHRLLL) is the Nuclear export signal 2 element. 2 disordered regions span residues 508-544 (GLCG…PAPV) and 647-698 (TKRK…KEPV). Low complexity-rich tracts occupy residues 513–533 (GPLM…SNGG) and 652–662 (ASSSSYTASSA). A required for phosphorylation by CSNK1E region spans residues 596-815 (ELEVAPVPDQ…GLDTSSVAPS (220 aa)). Phosphoserine is present on residues S661, S663, and S704. Disordered stretches follow at residues 749-772 (GLAP…TPDA), 809-873 (TSSV…PPAT), and 938-1037 (SQAP…ALSG). Residues 751–769 (APGPAPSPAPSPTVAPDPT) show a composition bias toward pro residues. Phosphoserine is present on S815. Residues 824 to 840 (IPPGRRHHCRSKAKRSR) carry the Nuclear localization signal motif. The span at 827–846 (GRRHHCRSKAKRSRHHHHQT) shows a compositional bias: basic residues. Pro residues-rich tracts occupy residues 859–873 (SPVP…PPAT) and 955–965 (PSLPPPPLSPP). Residues 973–985 (FNSRCSSPLQLNL) are compositionally biased toward polar residues. Phosphoserine occurs at positions 978 and 979. A Nuclear export signal 3 motif is present at residues 981 to 988 (LQLNLLQL). Residues 1042 to 1046 (LELLL) carry the LXXLL motif. Over residues 1051–1061 (RSGTGSAASGS) the composition is skewed to low complexity. Disordered stretches follow at residues 1051-1099 (RSGT…YFGS) and 1207-1291 (SVQD…NSTS). Over residues 1062 to 1076 (LGSGLGSGSGSGSHE) the composition is skewed to gly residues. The segment covering 1077 to 1094 (GGSTSASITRSSQSSHTS) has biased composition (low complexity). The segment at 1148 to 1291 (SRDAASVLKQ…ALPAEENSTS (144 aa)) is CRY binding domain. Gly residues predominate over residues 1235–1248 (GEGGGCGVGGGGGD). Over residues 1253–1267 (AQTQIGAKGSSSQDS) the composition is skewed to polar residues.

Homodimer. Component of the circadian core oscillator, which includes the CRY proteins, CLOCK or NPAS2, BMAL1 or BMAL2, CSNK1D and/or CSNK1E, TIMELESS, and the PER proteins. Interacts directly with TIMELESS. Interacts directly with PER2, PER3, CRY1 and CRY2. Interacts with BMAL1 and CLOCK. Interacts with GPRASP1. Interacts (phosphorylated) with BTRC and FBXW11; the interactions trigger proteasomal degradation. Interacts with NONO and SFPQ. Interacts with WDR5. Interacts with U2AF1L4 (Isoform 3). Interacts with USP2. Interacts with HNF4A. Post-translationally, phosphorylated on serine residues by CSNK1D, CSNK1E and probably also by CSNK1G2. Phosphorylation by CSNK1D or CSNK1E promotes nuclear location of PER proteins as well as ubiquitination and subsequent degradation. May be dephosphorylated by PP1. In terms of processing, ubiquitinated; requires phosphorylation by CSNK1E and interaction with BTRC and FBXW11. Deubiquitinated by USP2. As to expression, in brain, highest expression is observed in the SCN. Highly expressed in the pyramidal cell layer of the piriform cortex, the periventricular part of the caudate-putamen, many thalamic nuclei, and the granular layer of the cerebellar cortex. Weaker expression is detected in most area of the brain, including cortical and non cortical structures. Expression but no oscillations occurs in the glomerular and mitral cell layers of the olfactory bulb, the internal granular layer of the cerebellum, the cornu ammonis and dentate gyrus of the hippocampus, the cerebral and piriform cortices. Expressed in the renal cortex (at protein level). Also found in heart, brain, bladder, lumbar spinal cord, spleen, lung, liver, skeletal muscle and testis.

It is found in the nucleus. The protein resides in the cytoplasm. Transcriptional repressor which forms a core component of the circadian clock. The circadian clock, an internal time-keeping system, regulates various physiological processes through the generation of approximately 24 hour circadian rhythms in gene expression, which are translated into rhythms in metabolism and behavior. It is derived from the Latin roots 'circa' (about) and 'diem' (day) and acts as an important regulator of a wide array of physiological functions including metabolism, sleep, body temperature, blood pressure, endocrine, immune, cardiovascular, and renal function. Consists of two major components: the central clock, residing in the suprachiasmatic nucleus (SCN) of the brain, and the peripheral clocks that are present in nearly every tissue and organ system. Both the central and peripheral clocks can be reset by environmental cues, also known as Zeitgebers (German for 'timegivers'). The predominant Zeitgeber for the central clock is light, which is sensed by retina and signals directly to the SCN. The central clock entrains the peripheral clocks through neuronal and hormonal signals, body temperature and feeding-related cues, aligning all clocks with the external light/dark cycle. Circadian rhythms allow an organism to achieve temporal homeostasis with its environment at the molecular level by regulating gene expression to create a peak of protein expression once every 24 hours to control when a particular physiological process is most active with respect to the solar day. Transcription and translation of core clock components (CLOCK, NPAS2, BMAL1, BMAL2, PER1, PER2, PER3, CRY1 and CRY2) plays a critical role in rhythm generation, whereas delays imposed by post-translational modifications (PTMs) are important for determining the period (tau) of the rhythms (tau refers to the period of a rhythm and is the length, in time, of one complete cycle). A diurnal rhythm is synchronized with the day/night cycle, while the ultradian and infradian rhythms have a period shorter and longer than 24 hours, respectively. Disruptions in the circadian rhythms contribute to the pathology of cardiovascular diseases, cancer, metabolic syndromes and aging. A transcription/translation feedback loop (TTFL) forms the core of the molecular circadian clock mechanism. Transcription factors, CLOCK or NPAS2 and BMAL1 or BMAL2, form the positive limb of the feedback loop, act in the form of a heterodimer and activate the transcription of core clock genes and clock-controlled genes (involved in key metabolic processes), harboring E-box elements (5'-CACGTG-3') within their promoters. The core clock genes: PER1/2/3 and CRY1/2 which are transcriptional repressors form the negative limb of the feedback loop and interact with the CLOCK|NPAS2-BMAL1|BMAL2 heterodimer inhibiting its activity and thereby negatively regulating their own expression. This heterodimer also activates nuclear receptors NR1D1/2 and RORA/B/G, which form a second feedback loop and which activate and repress BMAL1 transcription, respectively. Regulates circadian target genes expression at post-transcriptional levels, but may not be required for the repression at transcriptional level. Controls PER2 protein decay. Represses CRY2 preventing its repression on CLOCK/BMAL1 target genes such as FXYD5 and SCNN1A in kidney and PPARA in liver. Besides its involvement in the maintenance of the circadian clock, has an important function in the regulation of several processes. Participates in the repression of glucocorticoid receptor NR3C1/GR-induced transcriptional activity by reducing the association of NR3C1/GR to glucocorticoid response elements (GREs) by BMAL1:CLOCK. Plays a role in the modulation of the neuroinflammatory state via the regulation of inflammatory mediators release, such as CCL2 and IL6. In spinal astrocytes, negatively regulates the MAPK14/p38 and MAPK8/JNK MAPK cascades as well as the subsequent activation of NFkappaB. Coordinately regulates the expression of multiple genes that are involved in the regulation of renal sodium reabsorption. Can act as gene expression activator in a gene and tissue specific manner, in kidney enhances WNK1 and SLC12A3 expression in collaboration with CLOCK. Modulates hair follicle cycling. Represses the CLOCK-BMAL1 induced transcription of BHLHE40/DEC1. The protein is Period circadian protein homolog 1 (Per1) of Mus musculus (Mouse).